A 37-amino-acid polypeptide reads, in one-letter code: Photosystem II reaction center protein T (37 aa).

Residues 3-23 (ALVYTFLLVSTLGILFFAIFF) form a helical membrane-spanning segment.

It belongs to the PsbT family. PSII is composed of 1 copy each of membrane proteins PsbA, PsbB, PsbC, PsbD, PsbE, PsbF, PsbH, PsbI, PsbJ, PsbK, PsbL, PsbM, PsbT, PsbY, PsbZ, Psb30/Ycf12, at least 3 peripheral proteins of the oxygen-evolving complex and a large number of cofactors. It forms dimeric complexes.

The protein localises to the plastid. The protein resides in the chloroplast thylakoid membrane. Functionally, found at the monomer-monomer interface of the photosystem II (PS II) dimer, plays a role in assembly and dimerization of PSII. PSII is a light-driven water plastoquinone oxidoreductase, using light energy to abstract electrons from H(2)O, generating a proton gradient subsequently used for ATP formation. The polypeptide is Photosystem II reaction center protein T (Ephedra sinica (Chinese ephedra)).